A 982-amino-acid chain; its full sequence is Coatomer subunit beta (982 aa).

4 HEAT repeats span residues 16-53 (SGAP…NGEP), 130-167 (ELVE…RFPE), 241-278 (YDKG…SPTA), and 317-352 (LQDS…NQNS).

In terms of assembly, oligomeric complex that consists of at least the alpha, beta, beta', gamma, delta, epsilon and zeta subunits.

The protein localises to the cytoplasm. The protein resides in the golgi apparatus membrane. It is found in the cytoplasmic vesicle. Its subcellular location is the COPI-coated vesicle membrane. Its function is as follows. The coatomer is a cytosolic protein complex that binds to dilysine motifs and reversibly associates with Golgi non-clathrin-coated vesicles, which further mediate biosynthetic protein transport from the ER, via the Golgi up to the trans Golgi network. Coatomer complex is required for budding from Golgi membranes, and is essential for the retrograde Golgi-to-ER transport of dilysine-tagged proteins. The protein is Coatomer subunit beta of Trypanosoma brucei brucei.